A 242-amino-acid chain; its full sequence is RxLR effector protein PexRD15 (242 aa).

Positions 1-24 (MMKSLYAVNLVLLLLLAFFAPAPA) are cleaved as a signal peptide. The short motif at 48–66 (RLLRAHSSDKEEQKEEEER) is the RxLR-dEER element.

The protein belongs to the RxLR effector family.

Its subcellular location is the secreted. It localises to the host cell membrane. In terms of biological role, effector that enhances P.infestans colonization of Nicotiana benthamiana leaves. This Phytophthora infestans (strain T30-4) (Potato late blight agent) protein is RxLR effector protein PexRD15.